The chain runs to 89 residues: Putative regulatory protein CLL_A1210 (89 aa).

The protein belongs to the RemA family.

The polypeptide is Putative regulatory protein CLL_A1210 (Clostridium botulinum (strain Eklund 17B / Type B)).